The following is a 184-amino-acid chain: Peptide deformylase (184 aa).

The Fe cation site is built by cysteine 111 and histidine 154. Glutamate 155 is an active-site residue. Fe cation is bound at residue histidine 158.

The protein belongs to the polypeptide deformylase family. Requires Fe(2+) as cofactor.

It catalyses the reaction N-terminal N-formyl-L-methionyl-[peptide] + H2O = N-terminal L-methionyl-[peptide] + formate. In terms of biological role, removes the formyl group from the N-terminal Met of newly synthesized proteins. Requires at least a dipeptide for an efficient rate of reaction. N-terminal L-methionine is a prerequisite for activity but the enzyme has broad specificity at other positions. In Macrococcus caseolyticus (strain JCSC5402) (Macrococcoides caseolyticum), this protein is Peptide deformylase.